A 197-amino-acid chain; its full sequence is Ribonuclease HII (197 aa).

The RNase H type-2 domain occupies 14–197 (EKIVGIDEAG…RSFNLGVNDD (184 aa)). A divalent metal cation contacts are provided by aspartate 20, glutamate 21, and aspartate 112.

It belongs to the RNase HII family. It depends on Mn(2+) as a cofactor. Mg(2+) is required as a cofactor.

The protein resides in the cytoplasm. It catalyses the reaction Endonucleolytic cleavage to 5'-phosphomonoester.. In terms of biological role, endonuclease that specifically degrades the RNA of RNA-DNA hybrids. The protein is Ribonuclease HII of Sulfurihydrogenibium sp. (strain YO3AOP1).